We begin with the raw amino-acid sequence, 424 residues long: Poly-cysteine and histidine-tailed protein (424 aa).

An N-terminal signal peptide occupies residues 1-17 (MAFSTIVVLFVAAVGFG). Asn-291 carries N-linked (GlcNAc...) asparagine glycosylation. Residues 372–390 (VGGKKQQKDQPESEKKAEN) show a composition bias toward basic and acidic residues. The disordered stretch occupies residues 372–424 (VGGKKQQKDQPESEKKAENMPETTGNASHHQHRHHHGDSSSESHEQHHHHHHH). Asn-397 carries N-linked (GlcNAc...) asparagine glycosylation.

Post-translationally, glycosylated. In terms of tissue distribution, expressed in larval tissues like cuticle, hypodermis and muscle (at protein level). Note=Not excreted into striated muscle fibers or nurse cell.

Its subcellular location is the secreted. Functionally, binds iron and zinc. May bind nickel. The chain is Poly-cysteine and histidine-tailed protein from Trichinella spiralis (Trichina worm).